Here is a 2968-residue protein sequence, read N- to C-terminus: Trinucleotide repeat-containing gene 18 protein (2968 aa).

Disordered stretches follow at residues 1 to 24 and 139 to 261; these read MDGRDFGPQRSVHGPPPPLLSGLA and GSPL…LAER. Residues 139–150 show a composition bias toward low complexity; that stretch reads GSPLLSQLGQPS. Composition is skewed to basic and acidic residues over residues 221–233 and 243–260; these read GKKDPRARGEEAS and QEARAEGRQDRGPPRLAE. A Phosphoserine modification is found at S263. Over residues 304-322 the composition is skewed to basic and acidic residues; that stretch reads GAKEAARQDEGARLLRRTE. 2 disordered regions span residues 304–356 and 381–488; these read GAKE…PAGV and FDER…PAAQ. Pro residues predominate over residues 327–351; sequence GPRPCPSPLPPPPAPPKGPPAPPAA. 3 stretches are compositionally biased toward basic and acidic residues: residues 395–405, 419–431, and 464–479; these read RDARAREREAG, PLDRPEGLREKNS, and ELLKPEADPRPCERAP. S611 is modified (phosphoserine). Disordered stretches follow at residues 612–679, 941–1002, 1019–1055, 1106–1190, 1212–1236, 1279–1306, 1497–1566, and 1687–1855; these read PFGG…EVRH, EHRA…SPVA, PAYAYPATPSSHPTSPPPASPPPTPGITRKEEAPENV, DADG…MATP, SCAEPSECPDFVEGPEPRVDSPGRT, LAQVAPSESQPTLEMSDCDVPAGEGQCP, KQRE…SDDY, and SLKS…RERA. Residue K620 forms a Glycyl lysine isopeptide (Lys-Gly) (interchain with G-Cter in SUMO2) linkage. 2 stretches are compositionally biased toward basic and acidic residues: residues 651–660 and 941–955; these read LKRDPERPES and EHRAEMEEKGSKRGL. The stretch at 916–949 forms a coiled coil; sequence LQQQAAQALELQRSAQLVQERLKAQEHRAEMEEK. 2 stretches are compositionally biased toward low complexity: residues 966–983 and 1019–1031; these read AGPGLLPRKPPGLAAGPA and PAYAYPATPSSHP. Over residues 1032–1043 the composition is skewed to pro residues; the sequence is TSPPPASPPPTP. The span at 1046 to 1055 shows a compositional bias: basic and acidic residues; that stretch reads TRKEEAPENV. A phosphoserine mark is found at S1127 and S1136. Over residues 1142–1162 the composition is skewed to basic and acidic residues; it reads EPLREGPEEEPLAEREVKAEV. The span at 1171–1181 shows a compositional bias: pro residues; sequence ELPPLESPLPL. A coiled-coil region spans residues 1481 to 1516; it reads LDFRMRLAEVQRQYKEKQRELVKLQRRRDSEDRREE. The span at 1497–1519 shows a compositional bias: basic and acidic residues; it reads KQRELVKLQRRRDSEDRREEPHR. Basic residues predominate over residues 1520 to 1534; the sequence is SLARRGPGRPRKRTH. Phosphoserine is present on S1540. Positions 1549-1563 are enriched in low complexity; the sequence is GHSSGKLSSKSLLTS. The segment covering 1816–1842 has biased composition (acidic residues); it reads SSEESFDQDESSEEEDEEEELEEEDEA. A phosphoserine mark is found at S1857 and S1863. Disordered regions lie at residues 1912-2148 and 2295-2771; these read YTDS…LTPA and LLVP…RLPS. Basic and acidic residues-rich tracts occupy residues 1957–1968 and 1993–2004; these read SPDKAKLAVEKG and LWTRRRSERIFL. Positions 2007 to 2024 are enriched in low complexity; the sequence is ASAAAPAPVSTAPATKTS. Residues 2034–2046 show a composition bias toward basic and acidic residues; the sequence is PRKDAGRAKDRKD. Residues 2069–2085 are compositionally biased toward low complexity; that stretch reads ALPSEARAPHASSLTAA. Positions 2093-2103 are enriched in basic and acidic residues; that stretch reads KGKEVKKENRG. The residue at position 2146 (T2146) is a Phosphothreonine. Residues 2307-2316 are compositionally biased toward basic and acidic residues; it reads TSKDTGEGKD. The segment covering 2329–2338 has biased composition (basic residues); that stretch reads ARGRGRKPSA. Residues 2365 to 2374 are compositionally biased toward low complexity; it reads EPSSTPGSKK. Residues 2375 to 2384 show a composition bias toward basic and acidic residues; it reads SPPEPVDKRA. Pro residues predominate over residues 2390 to 2401; sequence RPAPPQPSPAPP. Residues 2411–2433 show a composition bias toward low complexity; sequence PFAELPAPATSLAPAPLITMPAT. Composition is skewed to basic and acidic residues over residues 2441 to 2468 and 2477 to 2487; these read RAAEESGAKGPRRPGEEAELLVKLDHEG and AKEALLLREDP. Low complexity-rich tracts occupy residues 2559–2580 and 2603–2671; these read SSSSSSSGSSSSSSSSSSSGSE and SAAS…SSSS. Positions 2673 to 2685 are enriched in acidic residues; it reads TDEDSSCSSDDEA. A compositionally biased stretch (pro residues) spans 2723-2736; it reads APQPQAPPPQPTQP. Residue S2771 is modified to Phosphoserine. The 146-residue stretch at 2817 to 2962 folds into the BAH domain; that stretch reads EMIRIGDCAV…PTTGMIFSTD (146 aa).

This is Trinucleotide repeat-containing gene 18 protein from Homo sapiens (Human).